The following is a 1001-amino-acid chain: TonB-dependent receptor P3 (1001 aa).

A signal peptide spans M1–A26. Positions E109–Y116 match the TonB box motif. The TBDR plug domain occupies K120 to K232. The region spanning K238–F1001 is the TBDR beta-barrel domain. The short motif at Y984–F1001 is the TonB C-terminal box element.

Belongs to the TonB-dependent receptor family.

It localises to the cell outer membrane. In terms of biological role, tonB-dependent receptor probably involved in ulvan degradation. Ulvan is the main polysaccharide component of the Ulvales (green seaweed) cell wall. It is composed of disaccharide building blocks comprising 3-sulfated rhamnose (Rha3S) linked to D-glucuronic acid (GlcA), L-iduronic acid (IduA), or D-xylose (Xyl). The TonB-dependent receptor may mediate transport of ulvan oligosaccharides from the surface of the outer membrane to the periplasm for subsequent degradation. This chain is TonB-dependent receptor P3, found in Formosa agariphila (strain DSM 15362 / KCTC 12365 / LMG 23005 / KMM 3901 / M-2Alg 35-1).